Reading from the N-terminus, the 538-residue chain is Importin subunit alpha-6 (538 aa).

Residues 1-58 (MSYKPSAKTEVRRNRYKVSVDADEGRRRREDNMVEIRKNKREENLQKKRREGFNPSMA) enclose the IBB domain. The interval 1-69 (MSYKPSAKTE…QPGQDFSSSL (69 aa)) is disordered. Over residues 7 to 46 (AKTEVRRNRYKVSVDADEGRRRREDNMVEIRKNKREENLQ) the composition is skewed to basic and acidic residues. Residues 56 to 69 (SMASQPGQDFSSSL) are compositionally biased toward polar residues. ARM repeat units follow at residues 109-149 (NPPI…NIAS), 152-191 (SENT…NVAG), 194-234 (PKCR…NFCR), 236-275 (KPQP…YLSD), 278-317 (NEKI…NIVT), 320-360 (DIQT…NITA), 363-402 (TSQI…NATS), and 406-445 (HDQI…NILK).

It belongs to the importin alpha family. In terms of assembly, forms a complex with importin subunit beta-1.

Its subcellular location is the nucleus envelope. Binds to conventional NLS motifs and mediates nuclear protein import across the nuclear envelope. Acts as a cellular receptor for the nuclear import of the virD2 protein of Agrobacterium, but is not essential for Agrobacterium-mediated root transformation. In Arabidopsis thaliana (Mouse-ear cress), this protein is Importin subunit alpha-6.